Consider the following 234-residue polypeptide: tRNA (guanine-N(1)-)-methyltransferase (234 aa).

S-adenosyl-L-methionine contacts are provided by residues Gly-112 and 132–137 (IGDFIL).

It belongs to the RNA methyltransferase TrmD family. Homodimer.

The protein resides in the cytoplasm. The catalysed reaction is guanosine(37) in tRNA + S-adenosyl-L-methionine = N(1)-methylguanosine(37) in tRNA + S-adenosyl-L-homocysteine + H(+). Functionally, specifically methylates guanosine-37 in various tRNAs. This Campylobacter jejuni subsp. doylei (strain ATCC BAA-1458 / RM4099 / 269.97) protein is tRNA (guanine-N(1)-)-methyltransferase.